A 230-amino-acid polypeptide reads, in one-letter code: Uracil-DNA glycosylase (230 aa).

The active-site Proton acceptor is the D70.

This sequence belongs to the uracil-DNA glycosylase (UDG) superfamily. UNG family.

Its subcellular location is the cytoplasm. It catalyses the reaction Hydrolyzes single-stranded DNA or mismatched double-stranded DNA and polynucleotides, releasing free uracil.. Excises uracil residues from the DNA which can arise as a result of misincorporation of dUMP residues by DNA polymerase or due to deamination of cytosine. The polypeptide is Uracil-DNA glycosylase (Pseudomonas entomophila (strain L48)).